An 84-amino-acid polypeptide reads, in one-letter code: Small ribosomal subunit protein uS17 (84 aa).

Belongs to the universal ribosomal protein uS17 family. Part of the 30S ribosomal subunit.

In terms of biological role, one of the primary rRNA binding proteins, it binds specifically to the 5'-end of 16S ribosomal RNA. In Moorella thermoacetica (strain ATCC 39073 / JCM 9320), this protein is Small ribosomal subunit protein uS17.